The chain runs to 63 residues: U2-agatoxin-Ao1v (63 aa).

The N-terminal stretch at 1 to 14 (LLLISAMVGSMIAA) is a signal peptide. Residues 15–28 (VPEEESLQLSEDER) constitute a propeptide that is removed on maturation. 3 cysteine pairs are disulfide-bonded: Cys31–Cys47, Cys38–Cys52, and Cys46–Cys62.

The protein belongs to the neurotoxin 01 (U2-agtx) family. Expressed by the venom gland.

The protein resides in the secreted. Insect active toxin causing rapid but reversible paralysis in crickets. No activity shown in mammals. Does not show effect on mammalian voltage-gated calcium channels. The sequence is that of U2-agatoxin-Ao1v from Agelena orientalis (Funnel-web spider).